Here is a 97-residue protein sequence, read N- to C-terminus: uncharacterized protein (97 aa).

This is an uncharacterized protein from Escherichia coli O6:K15:H31 (strain 536 / UPEC).